We begin with the raw amino-acid sequence, 421 residues long: Atrochrysone carboxyl ACP thioesterase (421 aa).

Residues H207, H209, D211, and H212 each coordinate Zn(2+). The active-site Proton donor/acceptor is D211.

It belongs to the metallo-beta-lactamase superfamily. Requires Zn(2+) as cofactor. Specifically expressed in conidia.

It carries out the reaction atrochrysone carboxyl-[ACP] + H2O = atrochrysone carboxylate + holo-[ACP] + H(+). It functions in the pathway secondary metabolite biosynthesis. Functionally, atrochrysone carboxyl ACP thioesterase; part of the gene cluster that mediates the biosynthesis of trypacidin, a mycotoxin with antiprotozoal activity and that plays a role in the infection process. The pathway begins with the synthesis of atrochrysone thioester by the polyketide synthase (PKS) tpcC. The atrochrysone carboxyl ACP thioesterase tpcB then breaks the thioester bond and releases the atrochrysone carboxylic acid from tpcC. The decarboxylase tpcK converts atrochrysone carboxylic acid to atrochrysone which is further reduced into emodin anthrone. The next step is performed by the emodin anthrone oxygenase tpcL that catalyzes the oxidation of emodin anthrone to emodin. Emodin O-methyltransferase encoded by tpcA catalyzes methylation of the 8-hydroxy group of emodin to form questin. Ring cleavage of questin by questin oxidase tpcI leads to desmethylsulochrin via several intermediates including questin epoxide. Another methylation step catalyzed by tpcM leads to the formation of sulochrin which is further converted to monomethylsulfochrin by tpcH. Finally, the tpcJ catalyzes the conversion of monomethylsulfochrin to trypacidin. Trypacidin is toxic for human pulmonary and bronchial epithelial cells by initiating the intracellular formation of nitric oxide (NO) and hydrogen peroxide (H(2)O(2)), thus triggering host necrotic cell death. The trypacidin pathway is also able to produce endocrocin via a distinct route from the endocrocin Enc pathway. The chain is Atrochrysone carboxyl ACP thioesterase from Aspergillus fumigatus (strain ATCC MYA-4609 / CBS 101355 / FGSC A1100 / Af293) (Neosartorya fumigata).